The sequence spans 118 residues: Hisactophilin-2 (118 aa).

G2 carries N-myristoyl glycine lipidation. Residues 8-109 (AHNGHYLSAE…HVSTSHHHDH (102 aa)) are contains several HHXH repeats. 2 tandem repeats follow at residues 34-46 (FHIENHGSKVALR) and 74-86 (FHLEHHHGKVSIK). Residues 34–86 (FHIENHGSKVALRTHCGKYVSIGDHKQVYLSHHLHGDHSLFHLEHHHGKVSIK) form a 2 X 13 AA approximate repeats region. The segment at 99 to 118 (GHVSTSHHHDHHATFEEHIL) is disordered.

It belongs to the hisactophilin family. Homodimer or heterodimer of hatA and hatB, linked by a disulfide bond. Post-translationally, phosphorylated.

It is found in the cytoplasm. It localises to the cell membrane. In terms of biological role, may act as an intracellular pH sensor that links chemotactic signals to responses in the microfilament system of the cells by nucleating actin polymerization or stabilizing the filaments. This chain is Hisactophilin-2 (hatB), found in Dictyostelium discoideum (Social amoeba).